The sequence spans 152 residues: Arginine repressor (152 aa).

It belongs to the ArgR family.

The protein resides in the cytoplasm. It functions in the pathway amino-acid biosynthesis; L-arginine biosynthesis [regulation]. Regulates arginine biosynthesis genes. This chain is Arginine repressor, found in Lactococcus lactis subsp. cremoris (strain MG1363).